Reading from the N-terminus, the 206-residue chain is Ras-related protein Rab7 (206 aa).

GTP contacts are provided by residues 15–22 (GDTGVGKT), 63–67 (DTAGQ), and 125–128 (NKID). S-geranylgeranyl cysteine attachment occurs at residues cysteine 204 and cysteine 206. Cysteine 206 is subject to Cysteine methyl ester.

It belongs to the small GTPase superfamily. Rab family.

The protein resides in the cell membrane. In terms of biological role, protein transport. Probably involved in vesicular traffic. This Vigna aconitifolia (Moth bean) protein is Ras-related protein Rab7.